Reading from the N-terminus, the 103-residue chain is Large ribosomal subunit protein uL24 (103 aa).

This sequence belongs to the universal ribosomal protein uL24 family. Part of the 50S ribosomal subunit.

One of two assembly initiator proteins, it binds directly to the 5'-end of the 23S rRNA, where it nucleates assembly of the 50S subunit. Functionally, one of the proteins that surrounds the polypeptide exit tunnel on the outside of the subunit. This is Large ribosomal subunit protein uL24 from Halalkalibacterium halodurans (strain ATCC BAA-125 / DSM 18197 / FERM 7344 / JCM 9153 / C-125) (Bacillus halodurans).